A 132-amino-acid polypeptide reads, in one-letter code: Salivary protein 15 Iper-2 (132 aa).

Residues 1–18 (MKVVCIIVLFVIVAVNES) form the signal peptide. N24, N36, N62, N89, and N101 each carry an N-linked (GlcNAc...) asparagine glycan. The segment at 113-132 (GPNGQTCADKSQCVGHIPGC) is CD4-binding.

It belongs to the salp15 family. As to quaternary structure, interacts with host CD4. Interacts with host DC-SIGN (CD209). In terms of assembly, (Microbial infection) Interacts with Borrelia outer surface protein C (OspC). As to expression, expressed in salivary glands from feeding female ticks. Highly expressed 1 day after start of feeding, and weakly expressed at the initiation of feeding and 4 days after start of feeding.

It localises to the secreted. Salivary tick protein that downregulates host immune system by binding to both dendritic cells, and CD4(+) T cells. Specifically binds to the CD4 coreceptor on T cells. This interaction prevents the activation of the Src kinase, Lck, and its downstream substrate Zap-70, and results in deficient activation of PLCgamma1, the repression of calcium fluxes triggered by T-cell antigen receptor (TCR) ligation, and a subsequent reduction in interleukin-2 production. This salivary protein also binds to DC-SIGN (CD209) on dendritic cells (DC) and activates the Raf-1 kinase/MEK signaling pathway that results in down-regulating expression of pro-inflammatory cytokines. Furthermore, it inhibits T cell proliferation induced by DCs. It also inhibits in vitro keratinocyte inflammation induced by Borrelia burgdorferi or by the major outer surface protein (OspC) of Borrelia. In addition, it downregulates chemokines and monocyte chemoattractant protein 1, as well as several antimicrobial peptides such as defensins, cathelicidin, psoriasin, and RNase 7. Apart from its immunomodulatory activities, it is also associated with protection of Borrelia spirochetes from antibody-mediated killing through its binding to OspC. In vivo, tests on different immune disease animal models show promising therapeutic results, e.g., in inhibiting HIV infection, experimental autoimmune encephalomyelitis, transplantation rejection, and asthma. Its function is as follows. (Microbial infection) Protects Borrelia garinii from anti-Borrelia antibody-mediated cytotoxicity in vitro. May facilitate B.garinii transmission in mouse model. In terms of biological role, (Microbial infection) Protects Borrelia burgdorferi from anti-Borrelia antibody-mediated cytotoxicity in vitro. Functionally, (Microbial infection) Protects Borrelia afzelii from anti-Borrelia antibody-mediated cytotoxicity in vitro. This Ixodes persulcatus (Taiga tick) protein is Salivary protein 15 Iper-2.